A 419-amino-acid polypeptide reads, in one-letter code: Tubby-like protein 4 (419 aa).

The tract at residues 1–96 is disordered; the sequence is MAATKREPLR…EREEEEEGSS (96 aa). Residues 33 to 57 show a composition bias toward basic and acidic residues; sequence AKEKEKENEVPTEIGRGKDGGEKKP.

This sequence belongs to the TUB family.

The sequence is that of Tubby-like protein 4 (TULP4) from Oryza sativa subsp. japonica (Rice).